Here is a 335-residue protein sequence, read N- to C-terminus: Biotin synthase (335 aa).

The Radical SAM core domain occupies 46–274 (YNIQLASLFS…KSKIRLSAGR (229 aa)). [4Fe-4S] cluster-binding residues include Cys61, Cys65, and Cys68. Residues Cys105, Cys137, Cys197, and Arg269 each coordinate [2Fe-2S] cluster.

The protein belongs to the radical SAM superfamily. Biotin synthase family. As to quaternary structure, homodimer. The cofactor is [4Fe-4S] cluster. [2Fe-2S] cluster serves as cofactor.

The enzyme catalyses (4R,5S)-dethiobiotin + (sulfur carrier)-SH + 2 reduced [2Fe-2S]-[ferredoxin] + 2 S-adenosyl-L-methionine = (sulfur carrier)-H + biotin + 2 5'-deoxyadenosine + 2 L-methionine + 2 oxidized [2Fe-2S]-[ferredoxin]. It participates in cofactor biosynthesis; biotin biosynthesis; biotin from 7,8-diaminononanoate: step 2/2. Its function is as follows. Catalyzes the conversion of dethiobiotin (DTB) to biotin by the insertion of a sulfur atom into dethiobiotin via a radical-based mechanism. This chain is Biotin synthase, found in Prochlorococcus marinus (strain MIT 9312).